We begin with the raw amino-acid sequence, 1726 residues long: Transcription elongation factor SPT6 (1726 aa).

Composition is skewed to acidic residues over residues 1–14 (MSDF…ESEE), 32–49 (EEED…DDQD), and 59–80 (NDDD…DSED). Positions 1–197 (MSDFVESEAE…DDGQPLKKPK (197 aa)) are disordered. Ser2 carries the N-acetylserine modification. The tract at residues 2–485 (SDFVESEAEE…PKMQNAAKAS (484 aa)) is interaction with IWS1. Residues 2 to 916 (SDFVESEAEE…PPVLRQAVSL (915 aa)) form an interaction with PAAF1 region. Residues 3–51 (DFVESEAEESEEEYNHEGEVVPRVTKKFVEEEDDDEEEEEENLDDQDER) are a coiled coil. 2 positions are modified to phosphoserine: Ser7 and Ser12. Ser73, Ser78, and Ser91 each carry phosphoserine. A compositionally biased stretch (acidic residues) spans 95–105 (RLEDDDFDLIE). Over residues 111-122 (KVKRGQKYRRVK) the composition is skewed to basic residues. Ser125 is modified (phosphoserine). Acidic residues-rich tracts occupy residues 126 to 136 (DDDEDDEEEYG), 150 to 160 (FQDEEGEEGQE), and 169 to 190 (PDEE…DDDG). Phosphoserine is present on Ser267. Positions 317–1300 (ADWIYRNAFA…NEWKLPKDTY (984 aa)) are interaction with KDM6A. Positions 489–520 (LKRIKEDGDEEGEGEEAEDEEQRGPELKQASR) are disordered. Positions 495–509 (DGDEEGEGEEAEDEE) are enriched in acidic residues. Residues 510-520 (QRGPELKQASR) show a composition bias toward basic and acidic residues. Lys743 bears the N6-acetyllysine mark. The S1 motif domain occupies 1213 to 1282 (WNHFDSGSCP…EKFSADLTCR (70 aa)). Residues 1325 to 1431 (YIKRVIAHPS…FARDLLNHKY (107 aa)) enclose the SH2 domain. Tyr1515 carries the post-translational modification Phosphotyrosine. Thr1523 bears the Phosphothreonine mark. At Ser1526 the chain carries Phosphoserine. 2 positions are modified to phosphothreonine: Thr1530 and Thr1532. Ser1535 is modified (phosphoserine). Thr1539 bears the Phosphothreonine mark. Positions 1633-1726 (PQYHQLQAST…ATPLLDEMDR (94 aa)) are interaction with histone H2B and H3. A disordered region spans residues 1636-1726 (HQLQASTTPQ…ATPLLDEMDR (91 aa)). Positions 1639 to 1664 (QASTTPQSTQAQPQPSSSSRQRQQQP) are enriched in low complexity. At Lys1676 the chain carries N6-acetyllysine. Thr1697 bears the Phosphothreonine mark. Ser1701 and Ser1703 each carry phosphoserine. Phosphothreonine is present on residues Thr1709 and Thr1718.

Belongs to the SPT6 family. In terms of assembly, interacts with RNA polymerase II and the DRB sensitivity-inducing factor complex (DSIF complex), which is composed of SUPT5H and SUPT4H1 or SUPT4H2. Interacts with PAAF1. Interacts with histone H2B and H3. Interacts (via SH2 domain) with POLR2A phosphorylated at 'Ser-2'. Interacts (via SH2 domain) with SETD1A. Interacts with IWS1, KDM6A and AICDA. Interacts with WDR43. Dephosphorylated at Ser-1530 by the PNUTS-PP1 complex during RNA polymerase II transcription pause-release. In terms of tissue distribution, ubiquitously expressed.

Its subcellular location is the nucleus. Its function is as follows. Histone H3-H4 chaperone that plays a key role in the regulation of transcription elongation and mRNA processing. Enhances the transcription elongation by RNA polymerase II (RNAPII) and is also required for the efficient activation of transcriptional elongation by the HIV-1 nuclear transcriptional activator, Tat. Besides chaperoning histones in transcription, acts to transport and splice mRNA by forming a complex with IWS1 and the C-terminal domain (CTD) of the RNAPII subunit RPB1 (POLR2A). The SUPT6H:IWS1:CTD complex recruits mRNA export factors (ALYREF/THOC4, EXOSC10) as well as histone modifying enzymes (such as SETD2), to ensure proper mRNA splicing, efficient mRNA export and elongation-coupled H3K36 methylation, a signature chromatin mark of active transcription. SUPT6H via its association with SETD1A, regulates both class-switch recombination and somatic hypermutation through formation of H3K4me3 epigenetic marks on activation-induced cytidine deaminase (AICDA) target loci. Promotes the activation of the myogenic gene program by entailing erasure of the repressive H3K27me3 epigenetic mark through stabilization of the chromatin interaction of the H3K27 demethylase KDM6A. This Mus musculus (Mouse) protein is Transcription elongation factor SPT6 (Supt6h).